Here is a 404-residue protein sequence, read N- to C-terminus: S-adenosylmethionine synthase (404 aa).

139 to 144 lines the ATP pocket; the sequence is GKGSSD.

It belongs to the AdoMet synthase 2 family. Mg(2+) is required as a cofactor.

The enzyme catalyses L-methionine + ATP + H2O = S-adenosyl-L-methionine + phosphate + diphosphate. Its pathway is amino-acid biosynthesis; S-adenosyl-L-methionine biosynthesis; S-adenosyl-L-methionine from L-methionine: step 1/1. Catalyzes the formation of S-adenosylmethionine from methionine and ATP. The protein is S-adenosylmethionine synthase of Saccharolobus solfataricus (strain ATCC 35092 / DSM 1617 / JCM 11322 / P2) (Sulfolobus solfataricus).